Here is a 114-residue protein sequence, read N- to C-terminus: FK506-binding protein 1 (114 aa).

Residues 26–114 form the PPIase FKBP-type domain; the sequence is GDLVTIHYTG…VFDVELLKIN (89 aa).

The protein belongs to the FKBP-type PPIase family. FKBP1 subfamily.

The protein localises to the cytoplasm. The enzyme catalyses [protein]-peptidylproline (omega=180) = [protein]-peptidylproline (omega=0). Inhibited by both FK506 and rapamycin. Its function is as follows. PPIases accelerate the folding of proteins. It catalyzes the cis-trans isomerization of proline imidic peptide bonds in oligopeptides. This Kluyveromyces lactis (strain ATCC 8585 / CBS 2359 / DSM 70799 / NBRC 1267 / NRRL Y-1140 / WM37) (Yeast) protein is FK506-binding protein 1 (FPR1).